The following is a 396-amino-acid chain: Gamma-D-glutamyl-L-diamino acid endopeptidase 1 (396 aa).

LysM domains follow at residues 1-45 (MDIL…RIQI) and 51-95 (TSYT…TIQV). One can recognise a Peptidase M14 domain in the interval 108–394 (QNYDYSMMMN…EALGIFLAGL (287 aa)). The Zn(2+) site is built by H162 and E165. A substrate-binding site is contributed by D255. H307 is a Zn(2+) binding site. Y347 (proton donor) is an active-site residue. Residue E366 is the Proton donor/acceptor of the active site.

This sequence belongs to the peptidase M14 family. Requires Zn(2+) as cofactor.

The catalysed reaction is Hydrolysis of gamma-D-glutamyl bonds to the L-terminus (position 7) of meso-diaminopimelic acid (meso-A2pm) in 7-(L-Ala-gamma-D-Glu)-meso-A2pm and 7-(L-Ala-gamma-D-Glu)-7-(D-Ala)-meso-A2pm. It is required that the D-terminal amino and carboxy groups of meso-A2pm are unsubstituted.. An endopeptidase which hydrolyzes the gamma-D-Glu-(L)meso-diaminopimelic acid bond of L-Ala-gamma-D-Glu-(L)meso-diaminopimelic acid and L-Ala-gamma-D-Glu-(L)meso-diaminopimelic acid(L)-D-Ala peptides. It is active on spore cortex peptidoglycan. This is Gamma-D-glutamyl-L-diamino acid endopeptidase 1 from Lysinibacillus sphaericus (Bacillus sphaericus).